The following is a 202-amino-acid chain: Endothelin-1 (202 aa).

The signal sequence occupies residues 1–25 (MDYFPMIFALLFVAFQGAPEAAVLG). The propeptide occupies 26–50 (TELSAGAEDGGEKPAPATPWRPRRS). 2 cysteine pairs are disulfide-bonded: cysteine 53/cysteine 67 and cysteine 55/cysteine 63. Residues 74–202 (VNTPEHVVPY…DKKVIYNRAH (129 aa)) constitute a propeptide that is removed on maturation. The segment at 110 to 124 (CQCASQTDKKCWNFC) is endothelin-like.

Belongs to the endothelin/sarafotoxin family.

It localises to the secreted. Endothelins are endothelium-derived vasoconstrictor peptides. Probable ligand for G-protein coupled receptors EDNRA and EDNRB which activates PTK2B, BCAR1, BCAR3 and, GTPases RAP1 and RHOA cascade in glomerular mesangial cells. Also binds the DEAR/FBXW7-AS1 receptor. Promotes mesenteric arterial wall remodeling via activation of ROCK signaling and subsequent colocalization of NFATC3 with F-actin filaments. NFATC3 then translocates to the nucleus where it subsequently promotes the transcription of the smooth muscle hypertrophy and differentiation marker ACTA2. The protein is Endothelin-1 (EDN1) of Bos taurus (Bovine).